Here is a 328-residue protein sequence, read N- to C-terminus: YDG domain-containing protein At5g47150 (328 aa).

In terms of domain architecture, YDG spans 176–320; it reads GSVPGINIGD…KSVYKFKLCR (145 aa).

The protein resides in the nucleus. In Arabidopsis thaliana (Mouse-ear cress), this protein is YDG domain-containing protein At5g47150.